We begin with the raw amino-acid sequence, 110 residues long: Glycine-rich selenoprotein (110 aa).

The Lumenal portion of the chain corresponds to 1–20; the sequence is MVYIDHNGRVWEKRPWDWRR. A helical; Signal-anchor for type III membrane protein transmembrane segment spans residues 21–41; sequence IVELFVGIWFAIKQLFLTFLA. Topologically, residues 42-110 are cytoplasmic; the sequence is PFTGNNNQAN…CNMPAGGGUG (69 aa). The disordered stretch occupies residues 51 to 110; sequence NPRRGNGWGGGGGWGGGGGGGGGGGGGRPGSGSGGLRPNRRIGRIQPTMSCNMPAGGGUG. Gly residues predominate over residues 56–85; sequence NGWGGGGGWGGGGGGGGGGGGGRPGSGSGG. A non-standard amino acid (selenocysteine) is located at residue Sec-109.

The protein localises to the golgi apparatus membrane. Plays a role in the life span. May be involved in regulating the redox state of the cell and possesses anticarcinogenic properties. This Drosophila melanogaster (Fruit fly) protein is Glycine-rich selenoprotein (SelG).